The following is a 918-amino-acid chain: Aconitase-ribosomal protein bL21m fusion protein (918 aa).

Residues Met1–Phe30 constitute a mitochondrion transit peptide. The segment at Gln31–His811 is homocitrate dehydratase, mitochondrial. Residues Gln105 and Asp198–His200 contribute to the substrate site. Residues Cys394, Cys457, and Cys460 each coordinate [4Fe-4S] cluster. Substrate contacts are provided by residues Arg484, Arg489, Lys619, and Ala680 to Arg681. Residues Tyr812 to Asn918 are large ribosomal subunit protein bL21m.

It in the N-terminal section; belongs to the aconitase/IPM isomerase family. In the C-terminal section; belongs to the bacterial ribosomal protein bL21 family. In terms of assembly, component of the mitochondrial large ribosomal subunit (mt-LSU). Mature yeast 74S mitochondrial ribosomes consist of a small (37S) and a large (54S) subunit. The 37S small subunit contains a 15S ribosomal RNA (15S mt-rRNA) and at least 32 different proteins. The 54S large subunit contains a 21S rRNA (21S mt-rRNA) and at least 45 different proteins. It depends on [4Fe-4S] cluster as a cofactor.

Its subcellular location is the mitochondrion. It is found in the nucleus. It carries out the reaction (2R)-homocitrate = cis-homoaconitate + H2O. It functions in the pathway amino-acid biosynthesis; L-lysine biosynthesis via AAA pathway; L-alpha-aminoadipate from 2-oxoglutarate: step 2/5. Catalyzes the reversible dehydration of (R)-homocitrate to cis-homoaconitate, a step in the alpha-aminoadipate pathway for lysine biosynthesis. Functionally, component of the mitochondrial ribosome (mitoribosome), a dedicated translation machinery responsible for the synthesis of mitochondrial genome-encoded proteins, including at least some of the essential transmembrane subunits of the mitochondrial respiratory chain. The mitoribosomes are attached to the mitochondrial inner membrane and translation products are cotranslationally integrated into the membrane. The polypeptide is Aconitase-ribosomal protein bL21m fusion protein (aco2) (Schizosaccharomyces pombe (strain 972 / ATCC 24843) (Fission yeast)).